Consider the following 180-residue polypeptide: HTH-type transcriptional regulator EcpR (180 aa).

Residues 122-180 form the HTH luxR-type domain; sequence KDIKKDKITDREMKIIRMTAQGMQPKSIARIENCSVKTVYTHRRNAEAKLYSKIYKLVQ. Residues 146 to 165 constitute a DNA-binding region (H-T-H motif); it reads PKSIARIENCSVKTVYTHRR.

The protein belongs to the EcpR/MatA family.

The protein localises to the cytoplasm. In terms of biological role, part of the ecpRABCDE operon, which encodes the E.coli common pilus (ECP). ECP plays a dual role in early-stage biofilm development and host cell recognition. Positively regulates the expression of the ecp operon. The chain is HTH-type transcriptional regulator EcpR (ecpR) from Klebsiella pneumoniae subsp. pneumoniae (strain ATCC 700721 / MGH 78578).